Here is a 99-residue protein sequence, read N- to C-terminus: MVKRTHGYRYKSRKLLSKAPRERGMSGLSRLLYEYKPGDKVVIDIDPTFISTAPHRRYQGKVGVVIGTRGRAYVIETYIGDKKKIIITTPEHLRPHLGG.

It belongs to the eukaryotic ribosomal protein eL21 family.

In Pyrobaculum calidifontis (strain DSM 21063 / JCM 11548 / VA1), this protein is Large ribosomal subunit protein eL21.